Consider the following 333-residue polypeptide: Serine/threonine-protein phosphatase PP1-beta (333 aa).

Residues D63, H65, D91, and N123 each contribute to the Mn(2+) site. The Proton donor role is filled by H124. 2 residues coordinate Mn(2+): H172 and H247. Residues 306 to 333 (GAGGVGSNRPVTPPRNAPAAQPKKGAKK) form a disordered region. Over residues 322–333 (APAAQPKKGAKK) the composition is skewed to low complexity.

This sequence belongs to the PPP phosphatase family. PP-1 subfamily. As to quaternary structure, interacts with lab-1; the interaction is direct. Interacts with knl-1; the interaction is direct. The cofactor is Mn(2+).

Its subcellular location is the cytoplasm. It localises to the nucleus. It catalyses the reaction O-phospho-L-seryl-[protein] + H2O = L-seryl-[protein] + phosphate. It carries out the reaction O-phospho-L-threonyl-[protein] + H2O = L-threonyl-[protein] + phosphate. Functionally, serine/threonine-protein phosphatase essential for chromosomal dynamics during meiosis and mitosis. Antagonizes the function of air-2 in the regulation of chromosome cohesion. Dephosphorylates histone H3 at 'Ser-10'. Also involved in the activation of chloride channel clh-3 during cell swelling and meiotic maturation. Essential for embryogenesis. This chain is Serine/threonine-protein phosphatase PP1-beta (gsp-2), found in Caenorhabditis briggsae.